Reading from the N-terminus, the 1040-residue chain is Eukaryotic translation initiation factor 3 subunit A (1040 aa).

Residues 92 to 121 are a coiled coil; the sequence is LKKFIELAEKKVTEAQTKADEIQSSLESAA. Residues 339 to 523 form the PCI domain; sequence MTKAASFVLL…GVLTFDSDVF (185 aa). A coiled-coil region spans residues 608–906; sequence RVIIEKKKEA…AEARRAARKA (299 aa). Basic and acidic residues-rich tracts occupy residues 617–632 and 795–901; these read AATD…EETR and EVSE…EARR. Disordered regions lie at residues 617–641 and 795–1040; these read AATD…QQLQ and EVSE…QQNQ. Composition is skewed to low complexity over residues 908–917, 945–955, 978–993, and 1004–1018; these read LEPAAPAARP, KEAAGGAAPEA, SGSS…NGAP, and SSSS…TPGS.

It belongs to the eIF-3 subunit A family. As to quaternary structure, component of the eukaryotic translation initiation factor 3 (eIF-3) complex.

It localises to the cytoplasm. Functionally, RNA-binding component of the eukaryotic translation initiation factor 3 (eIF-3) complex, which is involved in protein synthesis of a specialized repertoire of mRNAs and, together with other initiation factors, stimulates binding of mRNA and methionyl-tRNAi to the 40S ribosome. The eIF-3 complex specifically targets and initiates translation of a subset of mRNAs involved in cell proliferation. This chain is Eukaryotic translation initiation factor 3 subunit A (tif32), found in Aspergillus terreus (strain NIH 2624 / FGSC A1156).